A 288-amino-acid chain; its full sequence is Diaminopimelate epimerase (288 aa).

N14 and N67 together coordinate substrate. The Proton donor role is filled by C76. Residues 77–78 (GN), N166, N199, and 217–218 (ER) each bind substrate. The active-site Proton acceptor is C226. 227-228 (GT) contributes to the substrate binding site.

This sequence belongs to the diaminopimelate epimerase family. As to quaternary structure, homodimer.

The protein resides in the cytoplasm. The enzyme catalyses (2S,6S)-2,6-diaminopimelate = meso-2,6-diaminopimelate. It functions in the pathway amino-acid biosynthesis; L-lysine biosynthesis via DAP pathway; DL-2,6-diaminopimelate from LL-2,6-diaminopimelate: step 1/1. Its function is as follows. Catalyzes the stereoinversion of LL-2,6-diaminopimelate (L,L-DAP) to meso-diaminopimelate (meso-DAP), a precursor of L-lysine and an essential component of the bacterial peptidoglycan. This chain is Diaminopimelate epimerase, found in Bacillus cereus (strain 03BB102).